Consider the following 491-residue polypeptide: Glutamyl-tRNA(Gln) amidotransferase subunit A (491 aa).

Active-site charge relay system residues include Lys76 and Ser154. Ser178 acts as the Acyl-ester intermediate in catalysis.

Belongs to the amidase family. GatA subfamily. As to quaternary structure, heterotrimer of A, B and C subunits.

The enzyme catalyses L-glutamyl-tRNA(Gln) + L-glutamine + ATP + H2O = L-glutaminyl-tRNA(Gln) + L-glutamate + ADP + phosphate + H(+). In terms of biological role, allows the formation of correctly charged Gln-tRNA(Gln) through the transamidation of misacylated Glu-tRNA(Gln) in organisms which lack glutaminyl-tRNA synthetase. The reaction takes place in the presence of glutamine and ATP through an activated gamma-phospho-Glu-tRNA(Gln). This chain is Glutamyl-tRNA(Gln) amidotransferase subunit A, found in Cereibacter sphaeroides (strain ATCC 17023 / DSM 158 / JCM 6121 / CCUG 31486 / LMG 2827 / NBRC 12203 / NCIMB 8253 / ATH 2.4.1.) (Rhodobacter sphaeroides).